The chain runs to 252 residues: ATP synthase subunit a (252 aa).

6 helical membrane passes run 29-49 (FTNV…FLFI), 87-107 (FFPL…IGLF), 117-137 (IMIT…YGFY), 146-166 (LFVP…IEVI), 196-216 (FIVS…LPLI), and 219-239 (VAIT…FTVL).

Belongs to the ATPase A chain family. F-type ATPases have 2 components, CF(1) - the catalytic core - and CF(0) - the membrane proton channel. CF(1) has five subunits: alpha(3), beta(3), gamma(1), delta(1), epsilon(1). CF(0) has three main subunits: a(1), b(2) and c(9-12). The alpha and beta chains form an alternating ring which encloses part of the gamma chain. CF(1) is attached to CF(0) by a central stalk formed by the gamma and epsilon chains, while a peripheral stalk is formed by the delta and b chains.

It is found in the cell inner membrane. Its function is as follows. Key component of the proton channel; it plays a direct role in the translocation of protons across the membrane. The protein is ATP synthase subunit a of Bartonella henselae (strain ATCC 49882 / DSM 28221 / CCUG 30454 / Houston 1) (Rochalimaea henselae).